Consider the following 604-residue polypeptide: MSSDAIRNTEQINAAIKIIENKTERPQSSTTPIDSKASTVAAANSTATETSRDLTQYTLDDGRVVSTNRRIMNKVPAITSHVPTDEELFQPNGIPRHEFLRDHFKREGKLSAAQAARIVTLATELFSKEPNLISVPAPITVCGDIHGQYFDLLKLFEVGGDPATTSYLFLGDYVDRGSFSFECLIYLYSLKLNFNDHFWLLRGNHECKHLTSYFTFKNEMLHKYNLDIYEKCCESFNNLPLAALMNGQYLCVHGGISPELNSLQDINNLNRFREIPSHGLMCDLLWADPIEEYDEVLDKDLTEEDIVNSKTMVPHHGKMAPSRDMFVPNSVRGCSYAFTYRAACHFLQETGLLSIIRAHEAQDAGYRMYKNTKTLGFPSLLTLFSAPNYLDTYNNKAAILKYENNVMNIRQFNMTPHPYWLPDFMDVFTWSLPFVGEKVTEMLVAILNICTEDELENDTPVIEELVGTDKKLPQAGKSEATPQPATSASPKHASILDDEHRRKALRNKILAVAKVSRMYSVLREETNKVQFLKDHNSGVLPRGALSNGVKGLDEALSTFERARKHDLINEKLPPSLDELKNENKKYYEKVWQKVHEHDAKNDSK.

The segment at 21-48 is disordered; it reads NKTERPQSSTTPIDSKASTVAAANSTAT. Thr-31 carries the post-translational modification Phosphothreonine. Low complexity predominate over residues 35 to 48; that stretch reads SKASTVAAANSTAT. Residues Asp-144, His-146, and Asp-172 each coordinate Fe cation. Asp-172 and Asn-204 together coordinate Zn(2+). His-205 acts as the Proton donor in catalysis. Residues His-253 and His-359 each contribute to the Zn(2+) site. The interval 470–497 is disordered; that stretch reads KKLPQAGKSEATPQPATSASPKHASILD. Polar residues predominate over residues 480–489; it reads ATPQPATSAS. Phosphoserine occurs at positions 489 and 520. The segment at 501–523 is calmodulin-binding; the sequence is RRKALRNKILAVAKVSRMYSVLR.

This sequence belongs to the PPP phosphatase family. PP-2B subfamily. Composed of two components (A and B), the A component is the catalytic subunit and the B component confers calcium sensitivity. The cofactor is Fe(3+). It depends on Zn(2+) as a cofactor.

The catalysed reaction is O-phospho-L-seryl-[protein] + H2O = L-seryl-[protein] + phosphate. It carries out the reaction O-phospho-L-threonyl-[protein] + H2O = L-threonyl-[protein] + phosphate. In terms of biological role, calcium-dependent, calmodulin-stimulated protein phosphatase. This subunit may have a role in the calmodulin activation of calcineurin. The sequence is that of Serine/threonine-protein phosphatase 2B catalytic subunit A2 (CMP2) from Saccharomyces cerevisiae (strain ATCC 204508 / S288c) (Baker's yeast).